The chain runs to 242 residues: Ribosomal RNA large subunit methyltransferase E (242 aa).

S-adenosyl-L-methionine-binding residues include Gly64, Trp66, Asp84, Asp100, and Asp125. Lys165 functions as the Proton acceptor in the catalytic mechanism. Positions 198-242 (SSETFLLGRGLKKASPNGLDSRSGTAAEPAPLVPIGTNSMPANGD) are disordered. Polar residues predominate over residues 233 to 242 (GTNSMPANGD).

The protein belongs to the class I-like SAM-binding methyltransferase superfamily. RNA methyltransferase RlmE family.

It is found in the cytoplasm. It carries out the reaction uridine(2552) in 23S rRNA + S-adenosyl-L-methionine = 2'-O-methyluridine(2552) in 23S rRNA + S-adenosyl-L-homocysteine + H(+). In terms of biological role, specifically methylates the uridine in position 2552 of 23S rRNA at the 2'-O position of the ribose in the fully assembled 50S ribosomal subunit. This chain is Ribosomal RNA large subunit methyltransferase E, found in Verminephrobacter eiseniae (strain EF01-2).